Consider the following 447-residue polypeptide: D-ribitol-5-phosphate cytidylyltransferase (447 aa).

It belongs to the IspD/TarI cytidylyltransferase family. IspD subfamily. As to quaternary structure, homodimer.

It localises to the cytoplasm. The protein localises to the cytosol. It catalyses the reaction D-ribitol 5-phosphate + CTP + H(+) = CDP-L-ribitol + diphosphate. The catalysed reaction is D-ribose 5-phosphate + CTP + H(+) = CDP-D-ribose + diphosphate. The enzyme catalyses D-ribulose 5-phosphate + CTP + H(+) = CDP-D-ribulose + diphosphate. The protein operates within protein modification; protein glycosylation. Functionally, cytidylyltransferase required for protein O-linked mannosylation. Catalyzes the formation of CDP-ribitol nucleotide sugar from D-ribitol 5-phosphate. CDP-ribitol is a substrate of FKTN during the biosynthesis of the phosphorylated O-mannosyl trisaccharide (N-acetylgalactosamine-beta-3-N-acetylglucosamine-beta-4-(phosphate-6-)mannose), a carbohydrate structure present in alpha-dystroglycan (DAG1), which is required for binding laminin G-like domain-containing extracellular proteins with high affinity. Shows activity toward other pentose phosphate sugars and mediates formation of CDP-ribulose or CDP-ribose using CTP and ribulose-5-phosphate or ribose-5-phosphate, respectively. Not involved in dolichol production. This is D-ribitol-5-phosphate cytidylyltransferase (Crppa) from Rattus norvegicus (Rat).